Reading from the N-terminus, the 620-residue chain is Arginine--tRNA ligase (620 aa).

The 'HIGH' region motif lies at 147–157 (ANPTGPIHIGG).

This sequence belongs to the class-I aminoacyl-tRNA synthetase family. Monomer.

It is found in the cytoplasm. The catalysed reaction is tRNA(Arg) + L-arginine + ATP = L-arginyl-tRNA(Arg) + AMP + diphosphate. This chain is Arginine--tRNA ligase, found in Bifidobacterium longum (strain DJO10A).